The following is a 563-amino-acid chain: Ribulokinase (563 aa).

The protein belongs to the ribulokinase family.

It catalyses the reaction D-ribulose + ATP = D-ribulose 5-phosphate + ADP + H(+). The catalysed reaction is L-ribulose + ATP = L-ribulose 5-phosphate + ADP + H(+). Its pathway is carbohydrate degradation; L-arabinose degradation via L-ribulose; D-xylulose 5-phosphate from L-arabinose (bacterial route): step 2/3. This Halalkalibacterium halodurans (strain ATCC BAA-125 / DSM 18197 / FERM 7344 / JCM 9153 / C-125) (Bacillus halodurans) protein is Ribulokinase.